The sequence spans 220 residues: Large ribosomal subunit protein uL3 (220 aa).

This sequence belongs to the universal ribosomal protein uL3 family. As to quaternary structure, part of the 50S ribosomal subunit. Forms a cluster with proteins L14 and L19.

Its function is as follows. One of the primary rRNA binding proteins, it binds directly near the 3'-end of the 23S rRNA, where it nucleates assembly of the 50S subunit. This chain is Large ribosomal subunit protein uL3, found in Staphylococcus carnosus (strain TM300).